We begin with the raw amino-acid sequence, 633 residues long: Phosphomethylpyrimidine synthase (633 aa).

Substrate is bound by residues Asn245, Met274, Tyr303, His339, 359–361 (SRG), 400–403 (DGLR), and Glu439. His443 lines the Zn(2+) pocket. Tyr466 is a binding site for substrate. His507 is a binding site for Zn(2+). Positions 587, 590, and 595 each coordinate [4Fe-4S] cluster.

Belongs to the ThiC family. As to quaternary structure, homodimer. The cofactor is [4Fe-4S] cluster.

The enzyme catalyses 5-amino-1-(5-phospho-beta-D-ribosyl)imidazole + S-adenosyl-L-methionine = 4-amino-2-methyl-5-(phosphooxymethyl)pyrimidine + CO + 5'-deoxyadenosine + formate + L-methionine + 3 H(+). It functions in the pathway cofactor biosynthesis; thiamine diphosphate biosynthesis. In terms of biological role, catalyzes the synthesis of the hydroxymethylpyrimidine phosphate (HMP-P) moiety of thiamine from aminoimidazole ribotide (AIR) in a radical S-adenosyl-L-methionine (SAM)-dependent reaction. In Neisseria meningitidis serogroup C (strain 053442), this protein is Phosphomethylpyrimidine synthase.